We begin with the raw amino-acid sequence, 25 residues long: GLWSKIKEAAKTAGLMAMGFVNDMV.

The protein belongs to the frog skin active peptide (FSAP) family. Dermaseptin subfamily. As to expression, expressed by the skin glands.

It localises to the secreted. Antibacterial peptide with activity against Gram-positive bacteria S.aureus and E.faecalis, and Gram-negative bacteria P.aeruginosa and E.coli. The chain is Dermaseptin-DI5 from Phyllomedusa distincta (Monkey frog).